A 378-amino-acid chain; its full sequence is Stimulator of interferon genes protein (378 aa).

At 1 to 17 (MPHSSLHPSIPQPRGLR) the chain is on the cytoplasmic side. Residues 1-190 (MPHSSLHPSI…IYNQFHNNTL (190 aa)) are mediates interaction with ZDHHC1 and ZDHHC11. The chain crosses the membrane as a helical span at residues 18–34 (AQKAALVLLSACLVALW). Residues 35-44 (GLGEPPDYTL) lie on the Lumenal side of the membrane. A helical transmembrane segment spans residues 45 to 69 (KWLVLHLASQQMGLLIKGICSLAEE). The Cytoplasmic portion of the chain corresponds to 70 to 91 (LCHVHSRYHGSYWRAVRACLCS). The S-palmitoyl cysteine moiety is linked to residue Cys88. A helical transmembrane segment spans residues 92 to 106 (SMRCGALLLLSCYFY). Residues 107-116 (CSLPNMADLP) are Lumenal-facing. The helical transmembrane segment at 117-134 (FTWMLALLGLSQALNILL) threads the bilayer. Residues 135-378 (GLQGLAPAEV…KPLPLRSDVF (244 aa)) are Cytoplasmic-facing. Lys150 is covalently cross-linked (Glycyl lysine isopeptide (Lys-Gly) (interchain with G-Cter in ubiquitin)). The segment at 153 to 339 (FNVAHGLAWS…LQHLRQEERE (187 aa)) is cyclic dinucleotide-binding domain (CBD). 2',3'-cGAMP contacts are provided by Ser162 and Tyr167. Ser162 and Tyr167 together coordinate 3',3'-c-di-GMP. Position 167 (Tyr167) interacts with 2',3'-cUAMP. A Glycyl lysine isopeptide (Lys-Gly) (interchain with G-Cter in ubiquitin) cross-link involves residue Lys236. Residues Arg238 and Thr263 each contribute to the 2',3'-cGAMP site. 2',3'-cUAMP-binding residues include Arg238 and Thr263. 3',3'-c-di-GMP-binding positions include 238–241 (RVYT) and Thr263. The tract at residues 339 to 378 (EVTMGSTETSVMPGSSVLSQEPELLISGLEKPLPLRSDVF) is C-terminal tail (CTT). At Ser354 the chain carries Phosphoserine. Residues Ser357 and Ser365 each carry the phosphoserine; by TBK1 modification. The pLxIS motif signature appears at 362–365 (LLIS).

It belongs to the STING family. In terms of assembly, homodimer; forms a homodimer in absence of cyclic nucleotide (c-di-GMP or cGAMP); 'Lys-63'-linked ubiquitination at Lys-150 is required for homodimerization. Homotetramer; in presence of cyclic nucleotide (c-di-GMP or cGAMP), forms tetramers and higher-order oligomers through side-by-side packing. Interacts (when phosphorylated) with IRF3; following activation and phosphorylation on the pLxIS motif by TBK1, recruits IRF3. Interacts with RIGI, MAVS and SSR2. Interacts with RNF5 and TRIM56. Interacts with TBK1; when homodimer, leading to subsequent production of IFN-beta. Interacts with IFIT1 and IFIT2. Interacts with TRIM29; this interaction induces STING1 ubiquitination and subsequent degradation. Associates with the MHC-II complex. Interacts with STEEP1; interaction takes place upon cGAMP-activation and STING1 phosphorylation by MAP3K7/TAK1 and promotes STING1 translocation to COPII vesicles. Interacts with SEC24A, SEC24B and SEC24C; promoting translocation to COPII vesicles. Interacts (when ubiquitinated) with SQSTM1; leading to relocalization to autophagosomes. Interacts with SURF4. Interacts with HNRNPA2B1. Interacts with ZDHHC1; ZDHHC1 constitutively interacts with STING1 and in presence of DNA viruses activates it by promoting its cGAMP-induced oligomerization and the recruitment of downstream signaling components. Interacts with ZDHHC11; in presence of DNA viruses promotes the recruitment of IRF3 to STING1. Interacts with TOMM70. Interacts with TAB1; promoting recruitment of TAB1 to the endoplasmic reticulum membrane and subsequent activation of MAP3K7/TAK1. Interacts (via transmembrane domain) with TMEM203. Interacts with DDX41. Phosphorylation by TBK1 leads to activation and production of IFN-beta. Following cyclic nucleotide (c-di-GMP or cGAMP)-binding, activation and translocation from the endoplasmic reticulum, STING1 is phosphorylated by TBK1 at Ser-365 in the pLxIS motif. The phosphorylated pLxIS motif constitutes an IRF3-binding motif, leading to recruitment of the transcription factor IRF3 to induce type-I interferons and other cytokines. Phosphorylated on tyrosine residues upon MHC-II aggregation. Dephosphorylation by PPP6C leads to inactivation and decreased production of IFN-beta. Phosphorylation at Ser-357 is also required to activate IRF3. Phosphorylation at Ser-354 by MAP3K7/TAK1 facilitates its interaction with STEEP1, promoting STING1 translocation to COPII vesicles. Post-translationally, ubiquitinated. Ubiquitinated via 'Lys-63'-linked ubiquitin chains in response to double-stranded DNA treatment, leading to relocalization to autophagosomes and subsequent degradation; this process is dependent on SQSTM1. 'Lys-63'-linked ubiquitination mediated by TRIM56 at Lys-150 promotes homodimerization and recruitment of the antiviral kinase TBK1 and subsequent production of IFN-beta. 'Lys-48'-linked polyubiquitination at Lys-150 occurring after viral infection is mediated by RNF5 and leads to proteasomal degradation. 'Lys-11'-linked polyubiquitination at Lys-150 by RNF26 leads to stabilize STING1: it protects STING1 from RNF5-mediated 'Lys-48'-linked polyubiquitination. 'Lys-33'-linked and 'Lys-48'-linked deubiquitinated by USP20; leading to its stabilization and promotion of innate antiviral response. 'Lys-48'-linked deubiquitinated by USP44; leading to its stabilization and promotion of innate antiviral response. 'Lys-63'-linked deubiquitinated by USP49; leading to inhibition of the subsequent recruitment of TBK1 to the signaling complex. 'Lys-63'-linked ubiquitination mediated by RNF39 promotes the activation of the cGAS-STING pathway. In terms of processing, palmitoylation takes place in the Golgi apparatus and creates a platform for the recruitment of TBK1.

It is found in the endoplasmic reticulum membrane. The protein resides in the cytoplasm. Its subcellular location is the perinuclear region. It localises to the endoplasmic reticulum-Golgi intermediate compartment membrane. The protein localises to the golgi apparatus membrane. It is found in the cytoplasmic vesicle. The protein resides in the autophagosome membrane. Its subcellular location is the mitochondrion outer membrane. It localises to the cell membrane. It carries out the reaction H(+)(in) = H(+)(out). Its function is as follows. Facilitator of innate immune signaling that acts as a sensor of cytosolic DNA from bacteria and viruses and promotes the production of type I interferon (IFN-alpha and IFN-beta). Innate immune response is triggered in response to non-CpG double-stranded DNA from viruses and bacteria delivered to the cytoplasm. Acts by binding cyclic dinucleotides: recognizes and binds cyclic di-GMP (c-di-GMP), a second messenger produced by bacteria, cyclic UMP-AMP (2',3'-cUAMP), and cyclic GMP-AMP (cGAMP), a messenger produced by CGAS in response to DNA virus in the cytosol. Upon binding to c-di-GMP or cGAMP, STING oligomerizes, translocates from the endoplasmic reticulum and is phosphorylated by TBK1 on the pLxIS motif, leading to recruitment and subsequent activation of the transcription factor IRF3 to induce expression of type I interferon and exert a potent anti-viral state. Exhibits 2',3' phosphodiester linkage-specific ligand recognition: can bind both 2'-3' linked cGAMP (2'-3'-cGAMP) and 3'-3' linked cGAMP but is preferentially activated by 2'-3' linked cGAMP. The preference for 2'-3'-cGAMP, compared to other linkage isomers is probably due to the ligand itself, whichs adopts an organized free-ligand conformation that resembles the STING1-bound conformation and pays low energy costs in changing into the active conformation. In addition to promote the production of type I interferons, plays a direct role in autophagy. Following cGAMP-binding, STING1 buds from the endoplasmic reticulum into COPII vesicles, which then form the endoplasmic reticulum-Golgi intermediate compartment (ERGIC). The ERGIC serves as the membrane source for WIPI2 recruitment and LC3 lipidation, leading to formation of autophagosomes that target cytosolic DNA or DNA viruses for degradation by the lysosome. Promotes autophagy by acting as a proton channel that directs proton efflux from the Golgi to facilitate MAP1LC3B/LC3B lipidation. The autophagy- and interferon-inducing activities can be uncoupled and autophagy induction is independent of TBK1 phosphorylation. Autophagy is also triggered upon infection by bacteria: following c-di-GMP-binding, which is produced by live Gram-positive bacteria, promotes reticulophagy. May be involved in translocon function, the translocon possibly being able to influence the induction of type I interferons. May be involved in transduction of apoptotic signals via its association with the major histocompatibility complex class II (MHC-II). In Bos taurus (Bovine), this protein is Stimulator of interferon genes protein.